Reading from the N-terminus, the 192-residue chain is Lipid A acyltransferase PagP (192 aa).

A signal peptide spans 1-29 (MVVNVVIVAKKYFLFITLLIIQVSLPAHA). Residues H64, D107, and S108 contribute to the active site.

This sequence belongs to the lipid A palmitoyltransferase family. In terms of assembly, homodimer.

It localises to the cell outer membrane. The catalysed reaction is a lipid A + a 1,2-diacyl-sn-glycero-3-phosphocholine = a hepta-acyl lipid A + a 2-acyl-sn-glycero-3-phosphocholine. The enzyme catalyses a lipid IVA + a 1,2-diacyl-sn-glycero-3-phosphocholine = a lipid IVB + a 2-acyl-sn-glycero-3-phosphocholine. It carries out the reaction a lipid IIA + a 1,2-diacyl-sn-glycero-3-phosphocholine = a lipid IIB + a 2-acyl-sn-glycero-3-phosphocholine. Its function is as follows. Transfers a fatty acid residue from the sn-1 position of a phospholipid to the N-linked hydroxyfatty acid chain on the proximal unit of lipid A or its precursors. The protein is Lipid A acyltransferase PagP of Citrobacter rodentium (strain ICC168) (Citrobacter freundii biotype 4280).